Consider the following 662-residue polypeptide: Polyadenylate-binding protein 4 (662 aa).

The segment at methionine 1 to alanine 23 is disordered. 4 consecutive RRM domains span residues cysteine 46–arginine 124, glycine 134–arginine 211, threonine 225–lysine 302, and leucine 328–arginine 405. Composition is skewed to low complexity over residues proline 480–proline 489 and glutamine 506–proline 518. Disordered stretches follow at residues proline 480–proline 518 and asparagine 634–leucine 662. A PABC domain is found at serine 558–glutamine 635. The span at asparagine 634–proline 649 shows a compositional bias: polar residues.

It belongs to the polyadenylate-binding protein type-1 family. In terms of assembly, interacts with ERD15/CID1. Interacts with Turnip mosaic virus (TuMV) VPg-Pro.

The protein resides in the cytoplasm. It is found in the nucleus. Functionally, binds the poly(A) tail of mRNA. Appears to be an important mediator of the multiple roles of the poly(A) tail in mRNA biogenesis, stability and translation. During infection with potyvirus TuMV, acts as a potential integral component of the viral replicase complex that could play an important role in the regulation of potyviral RNA-dependent RNA polymerase (RdRp). This is Polyadenylate-binding protein 4 (PAB4) from Arabidopsis thaliana (Mouse-ear cress).